We begin with the raw amino-acid sequence, 303 residues long: Glycine--tRNA ligase alpha subunit (303 aa).

This sequence belongs to the class-II aminoacyl-tRNA synthetase family. Tetramer of two alpha and two beta subunits.

Its subcellular location is the cytoplasm. It catalyses the reaction tRNA(Gly) + glycine + ATP = glycyl-tRNA(Gly) + AMP + diphosphate. In Escherichia coli (strain K12), this protein is Glycine--tRNA ligase alpha subunit (glyQ).